Here is a 260-residue protein sequence, read N- to C-terminus: Voltage-dependent calcium channel gamma-6 subunit (260 aa).

Residues 14–33 (RRGAAGRRRAHGQGRSGLTP) form a disordered region. Residues 15-25 (RGAAGRRRAHG) show a composition bias toward basic residues. 4 helical membrane passes run 43 to 63 (LLLA…EFWV), 143 to 163 (VIAV…IMVL), 169 to 189 (FLLR…LVSL), and 221 to 241 (LGCG…FLLL).

It belongs to the PMP-22/EMP/MP20 family. CACNG subfamily. In terms of assembly, interacts with CACNA1C. Identified in a complex with the L-type calcium channel subunits CACNA1C, CACNA2D1 and either CACNB1 or CACNB2. As to expression, detected in heart left ventricle.

It localises to the cell membrane. In terms of biological role, regulates the activity of L-type calcium channels that contain CACNA1C as pore-forming subunit. This chain is Voltage-dependent calcium channel gamma-6 subunit (CACNG6), found in Homo sapiens (Human).